The following is a 200-amino-acid chain: Coiled-coil domain-containing protein 28B (200 aa).

An N-acetylmethionine modification is found at Met-1. Over residues 1–10 the composition is skewed to basic residues; that stretch reads MDDKKKKRSP. A disordered region spans residues 1-49; it reads MDDKKKKRSPKPCLAQPAQAPGTLRRVPVPTSHSGSLALGLPHLPSPKQ. Residues Ser-46 and Ser-115 each carry the phosphoserine modification. The span at 141–152 shows a compositional bias: acidic residues; sequence EEEDDEEEEDGV. The tract at residues 141-164 is disordered; the sequence is EEEDDEEEEDGVTEGLPEEQKKTM. A coiled-coil region spans residues 158-183; the sequence is EEQKKTMADRNLDQLLSNLEDLSNSI.

Interacts with BBS1, BBS2, BBS4, BBS5, BBS6, BBS7 and TTC8/BBS8. Interacts with MAPKAP1/SIN1 isoform 1 and RICTOR.

It localises to the cytoplasm. It is found in the cytoskeleton. Its subcellular location is the microtubule organizing center. The protein localises to the centrosome. Involved in ciliogenesis. Regulates cilia length through its interaction with MAPKAP1/SIN1 but independently of mTORC2 complex. Modulates mTORC2 complex assembly and function, possibly enhances AKT1 phosphorylation. Does not seem to modulate assembly and function of mTORC1 complex. This Homo sapiens (Human) protein is Coiled-coil domain-containing protein 28B (CCDC28B).